The following is a 480-amino-acid chain: Ammonium transporter 2 member 4 (480 aa).

The Extracellular portion of the chain corresponds to 1-27 (MELPSNLLPDEASPEWMNKGDNAWQLT). A helical membrane pass occupies residues 28-48 (AATMVGLQSIPGLVILYGSLV). Topologically, residues 49–51 (KKT) are cytoplasmic. The helical transmembrane segment at 52–72 (WAINSAFMAFYAFASVLLCWV) threads the bilayer. At 73-113 (SWAYQMSFGEKMVFFLGKPNVALDEKFLLGKAFLGNFPNAT) the chain is on the extracellular side. Asn111 carries an N-linked (GlcNAc...) asparagine glycan. A helical transmembrane segment spans residues 114–134 (MVFYQGVFAGLTLILIAGALL). The Cytoplasmic portion of the chain corresponds to 135–141 (GRMNIRA). A helical membrane pass occupies residues 142–162 (WMLFVPLWVTFSYTVVAFSIW). Residues 163–175 (CPDGWLAKRGVID) lie on the Extracellular side of the membrane. The helical transmembrane segment at 176–196 (FAGGYVIHLSAGVAGFTAAYW) threads the bilayer. Residues 197 to 214 (VGPRADKDRETFPAATNN) are Cytoplasmic-facing. The helical transmembrane segment at 215–235 (MIMVLAGAGLLWMGWSGFNGG) threads the bilayer. Over 236 to 242 (APFVAST) the chain is Extracellular. Residues 243 to 263 (IASLAILNTHVCTAASITVWV) traverse the membrane as a helical segment. At 264–274 (MLDTFYFGKPT) the chain is on the cytoplasmic side. Residues 275–295 (VFGAVQGMITGLVCITPAAGV) form a helical membrane-spanning segment. The Extracellular segment spans residues 296–298 (VQG). Residues 299–319 (WAAILMGFISGSIPWYTMMVL) form a helical membrane-spanning segment. Residues 320–334 (HNKVNFLKKIDDPMA) are Cytoplasmic-facing. The helical transmembrane segment at 335–355 (VFHTHAIAGALGGILTGFFAV) threads the bilayer. Over 356–394 (PKLCRLFYMVPDWEKYIGLAYGLQNKGATQAGLKQMVIQ) the chain is Extracellular. A helical transmembrane segment spans residues 395-415 (IEAIVFVICYNVLMTSLICLI). At 416-480 (VRVIVPLRLN…SRSLGELQMV (65 aa)) the chain is on the cytoplasmic side.

The protein belongs to the ammonia transporter channel (TC 1.A.11.2) family.

It localises to the cell membrane. Involved in ammonium transport. May be involved in arbuscular mycorrhizal (AM) symbiosis with AM fungi. In Medicago truncatula (Barrel medic), this protein is Ammonium transporter 2 member 4.